Consider the following 638-residue polypeptide: ATP-dependent rRNA helicase spb4 (638 aa).

Positions 14–42 (WDGVSPSLSEWVLEAVSSMGFTRMTPVQA) match the Q motif motif. One can recognise a Helicase ATP-binding domain in the interval 45 to 249 (IPLFMAHKDV…RVGLRNPVKV (205 aa)). Residue 58 to 65 (AVTGSGKT) participates in ATP binding. Positions 197 to 200 (DEAD) match the DEAD box motif. In terms of domain architecture, Helicase C-terminal spans 283-437 (ALKHILHSVD…PISFSESEAT (155 aa)). 2 stretches are compositionally biased toward basic and acidic residues: residues 534–554 (LLQESKEGDGTQESSNKRKAT) and 577–615 (QRRQEKNKWEKMTEEERQKIRETEQMVESIRVKNEEERR). The tract at residues 534–638 (LLQESKEGDG…KDEEEFEGFD (105 aa)) is disordered. Residues 566–619 (RNKKQKRREQKQRRQEKNKWEKMTEEERQKIRETEQMVESIRVKNEEERRLRRA) adopt a coiled-coil conformation.

It belongs to the DEAD box helicase family. DDX55/SPB4 subfamily. Component of pre-60S ribosomal complexes.

Its subcellular location is the nucleus. The protein resides in the nucleolus. The enzyme catalyses ATP + H2O = ADP + phosphate + H(+). In terms of biological role, ATP-binding RNA helicase involved in the biogenesis of 60S ribosomal subunits. Binds 90S pre-ribosomal particles and dissociates from pre-60S ribosomal particles after processing of 27SB pre-rRNA. Required for the normal formation of 18S rRNA through the processing of pre-rRNAs at sites A0, A1 and A2, and the normal formation of 25S and 5.8S rRNAs through the processing of pre-rRNAs at sites C1 and C2. The protein is ATP-dependent rRNA helicase spb4 of Aspergillus oryzae (strain ATCC 42149 / RIB 40) (Yellow koji mold).